The chain runs to 574 residues: Proline--tRNA ligase (574 aa).

The protein belongs to the class-II aminoacyl-tRNA synthetase family. ProS type 1 subfamily. As to quaternary structure, homodimer.

It is found in the cytoplasm. The catalysed reaction is tRNA(Pro) + L-proline + ATP = L-prolyl-tRNA(Pro) + AMP + diphosphate. Catalyzes the attachment of proline to tRNA(Pro) in a two-step reaction: proline is first activated by ATP to form Pro-AMP and then transferred to the acceptor end of tRNA(Pro). As ProRS can inadvertently accommodate and process non-cognate amino acids such as alanine and cysteine, to avoid such errors it has two additional distinct editing activities against alanine. One activity is designated as 'pretransfer' editing and involves the tRNA(Pro)-independent hydrolysis of activated Ala-AMP. The other activity is designated 'posttransfer' editing and involves deacylation of mischarged Ala-tRNA(Pro). The misacylated Cys-tRNA(Pro) is not edited by ProRS. This is Proline--tRNA ligase from Ralstonia nicotianae (strain ATCC BAA-1114 / GMI1000) (Ralstonia solanacearum).